A 176-amino-acid polypeptide reads, in one-letter code: N-alpha-acetyltransferase 30 (176 aa).

The N-acetyltransferase domain maps to 3-159; the sequence is IVYKPLDIRN…DAFKLILPLT (157 aa).

This sequence belongs to the acetyltransferase family. MAK3 subfamily. Component of the N-terminal acetyltransferase C (NatC) complex, which is composed of MAK3, MAK10 and MAK31.

The protein resides in the cytoplasm. The protein localises to the nucleus. The catalysed reaction is N-terminal L-methionyl-L-leucyl-[protein] + acetyl-CoA = N-terminal N(alpha)-acetyl-L-methionyl-L-leucyl-[protein] + CoA + H(+). The enzyme catalyses N-terminal L-methionyl-L-isoleucyl-[protein] + acetyl-CoA = N-terminal N(alpha)-acetyl-L-methionyl-L-isoleucyl-[protein] + CoA + H(+). It catalyses the reaction N-terminal L-methionyl-L-phenylalanyl-[protein] + acetyl-CoA = N-terminal N(alpha)-acetyl-L-methionyl-L-phenylalanyl-[protein] + CoA + H(+). It carries out the reaction N-terminal L-methionyl-L-tryptophyl-[protein] + acetyl-CoA = N-terminal N(alpha)-acetyl-L-methionyl-L-tryptophyl-[protein] + CoA + H(+). The catalysed reaction is N-terminal L-methionyl-L-tyrosyl-[protein] + acetyl-CoA = N-terminal N(alpha)-acetyl-L-methionyl-L-tyrosyl-[protein] + CoA + H(+). Its function is as follows. Catalytic component of the NatC N-terminal acetyltransferase, which catalyzes acetylation of the N-terminus Met of L-A virus GAG protein and possibly GRH1. The chain is N-alpha-acetyltransferase 30 (MAK3) from Saccharomyces cerevisiae (strain ATCC 204508 / S288c) (Baker's yeast).